A 94-amino-acid chain; its full sequence is Large ribosomal subunit protein bL25 (94 aa).

It belongs to the bacterial ribosomal protein bL25 family. In terms of assembly, part of the 50S ribosomal subunit; part of the 5S rRNA/L5/L18/L25 subcomplex. Contacts the 5S rRNA. Binds to the 5S rRNA independently of L5 and L18.

This is one of the proteins that binds to the 5S RNA in the ribosome where it forms part of the central protuberance. This chain is Large ribosomal subunit protein bL25, found in Salmonella gallinarum (strain 287/91 / NCTC 13346).